A 257-amino-acid polypeptide reads, in one-letter code: Deoxyribose-phosphate aldolase (257 aa).

The Proton donor/acceptor role is filled by Asp102. Residue Lys166 is the Schiff-base intermediate with acetaldehyde of the active site. Lys198 acts as the Proton donor/acceptor in catalysis.

The protein belongs to the DeoC/FbaB aldolase family. DeoC type 2 subfamily.

Its subcellular location is the cytoplasm. The enzyme catalyses 2-deoxy-D-ribose 5-phosphate = D-glyceraldehyde 3-phosphate + acetaldehyde. It participates in carbohydrate degradation; 2-deoxy-D-ribose 1-phosphate degradation; D-glyceraldehyde 3-phosphate and acetaldehyde from 2-deoxy-alpha-D-ribose 1-phosphate: step 2/2. Its function is as follows. Catalyzes a reversible aldol reaction between acetaldehyde and D-glyceraldehyde 3-phosphate to generate 2-deoxy-D-ribose 5-phosphate. This is Deoxyribose-phosphate aldolase from Aeromonas salmonicida (strain A449).